The following is a 639-amino-acid chain: Collagen alpha-1(XII) chain (639 aa).

Positions 1 to 114 constitute a VWFA domain; sequence CRKSLLQAVA…DSLSKIVDDL (114 aa). 6 Fibronectin type-III domains span residues 130–219, 220–310, 311–401, 402–490, 491–585, and 586–639; these read APSN…LPVP, IVSL…LPLP, RPQD…VPAP, TNLR…SPKS, GPRN…TVRN, and LRVY…LRNL. A disordered region spans residues 473 to 496; sequence DESESDDLTGSERTSPKSGPRNLQ.

It belongs to the fibril-associated collagens with interrupted helices (FACIT) family. Trimer of identical chains each containing 190 kDa of non-triple-helical sequences. In terms of processing, the triple-helical tail is stabilized by disulfide bonds at each end. Post-translationally, prolines at the third position of the tripeptide repeating unit (G-X-Y) are hydroxylated in some or all of the chains. O-glycosylated; glycosaminoglycan of chondroitin-sulfate type.

Its subcellular location is the secreted. It localises to the extracellular space. The protein localises to the extracellular matrix. Its function is as follows. Type XII collagen interacts with type I collagen-containing fibrils, the COL1 domain could be associated with the surface of the fibrils, and the COL2 and NC3 domains may be localized in the perifibrillar matrix. The protein is Collagen alpha-1(XII) chain (COL12A1) of Oryctolagus cuniculus (Rabbit).